A 106-amino-acid chain; its full sequence is Large ribosomal subunit protein P2A (106 aa).

A Glycyl lysine isopeptide (Lys-Gly) (interchain with G-Cter in ubiquitin) cross-link involves residue Lys2. Thr16 is modified (phosphothreonine). Phosphoserine occurs at positions 40 and 43. Residue Lys48 forms a Glycyl lysine isopeptide (Lys-Gly) (interchain with G-Cter in ubiquitin) linkage. Ser49 is subject to Phosphoserine. The span at 65-82 (PAAGPASAGGAAAASGDA) shows a compositional bias: low complexity. The interval 65–106 (PAAGPASAGGAAAASGDAAAEEEKEEEAAEESDDDMGFGLFD) is disordered. The segment covering 83–100 (AAEEEKEEEAAEESDDDM) has biased composition (acidic residues). Ser96 carries the post-translational modification Phosphoserine.

This sequence belongs to the eukaryotic ribosomal protein P1/P2 family. Component of the large ribosomal subunit (LSU). Mature yeast ribosomes consist of a small (40S) and a large (60S) subunit. The 40S small subunit contains 1 molecule of ribosomal RNA (18S rRNA) and 33 different proteins (encoded by 57 genes). The large 60S subunit contains 3 rRNA molecules (25S, 5.8S and 5S rRNA) and 46 different proteins (encoded by 81 genes). The 5 acidic ribosomal P-proteins form the stalk structure of the 60S subunit. They are organized as a pentameric complex in which uL10/P0 interacts with 2 heterodimers, P1A-P2B and P1B-P2A. In terms of processing, phosphorylation is not involved in the interaction of the acidic P proteins with the ribosome, however it is suggested to affect the ribosome activity and to participate in a possible ribosome regulatory mechanism. The N-terminus is not modified.

It localises to the cytoplasm. Functionally, component of the ribosome, a large ribonucleoprotein complex responsible for the synthesis of proteins in the cell. The small ribosomal subunit (SSU) binds messenger RNAs (mRNAs) and translates the encoded message by selecting cognate aminoacyl-transfer RNA (tRNA) molecules. The large subunit (LSU) contains the ribosomal catalytic site termed the peptidyl transferase center (PTC), which catalyzes the formation of peptide bonds, thereby polymerizing the amino acids delivered by tRNAs into a polypeptide chain. The nascent polypeptides leave the ribosome through a tunnel in the LSU and interact with protein factors that function in enzymatic processing, targeting, and the membrane insertion of nascent chains at the exit of the ribosomal tunnel. The protein is Large ribosomal subunit protein P2A of Saccharomyces cerevisiae (strain ATCC 204508 / S288c) (Baker's yeast).